Consider the following 424-residue polypeptide: Histidine--tRNA ligase (424 aa).

It belongs to the class-II aminoacyl-tRNA synthetase family. Homodimer.

Its subcellular location is the cytoplasm. The catalysed reaction is tRNA(His) + L-histidine + ATP = L-histidyl-tRNA(His) + AMP + diphosphate + H(+). The protein is Histidine--tRNA ligase of Yersinia pestis bv. Antiqua (strain Antiqua).